The chain runs to 59 residues: UPF0434 protein Sputw3181_2540 (59 aa).

It belongs to the UPF0434 family.

This is UPF0434 protein Sputw3181_2540 from Shewanella sp. (strain W3-18-1).